The sequence spans 358 residues: Phospho-N-acetylmuramoyl-pentapeptide-transferase (358 aa).

10 helical membrane-spanning segments follow: residues 13–47, 81–101, 106–126, 148–168, 171–191, 201–221, 228–248, 255–275, 278–298, and 336–356; these read LFILNTFALIVTSYLFNNFIFTGVYILFFFISIFI, MGGIFMIIPFLILLLIITINL, LILLLLTVFGFFITGFLDDYL, ISIIFILLAYEKNLISPLITI, SWAINMNIFILPVAFLVLVGI, LDGLAAGCSGIVFYGLGTEIL, LFVFSILCFSMSGICLGFLKY, IFMGDTGSLSIGAILGSIALL, SIFTLSIFSGIFIIESLSVII, and IVENFWKINILLVILGIVLKI.

This sequence belongs to the glycosyltransferase 4 family. MraY subfamily. It depends on Mg(2+) as a cofactor.

The protein resides in the cell inner membrane. It carries out the reaction UDP-N-acetyl-alpha-D-muramoyl-L-alanyl-gamma-D-glutamyl-meso-2,6-diaminopimeloyl-D-alanyl-D-alanine + di-trans,octa-cis-undecaprenyl phosphate = di-trans,octa-cis-undecaprenyl diphospho-N-acetyl-alpha-D-muramoyl-L-alanyl-D-glutamyl-meso-2,6-diaminopimeloyl-D-alanyl-D-alanine + UMP. It functions in the pathway cell wall biogenesis; peptidoglycan biosynthesis. In terms of biological role, catalyzes the initial step of the lipid cycle reactions in the biosynthesis of the cell wall peptidoglycan: transfers peptidoglycan precursor phospho-MurNAc-pentapeptide from UDP-MurNAc-pentapeptide onto the lipid carrier undecaprenyl phosphate, yielding undecaprenyl-pyrophosphoryl-MurNAc-pentapeptide, known as lipid I. In Prochlorococcus marinus (strain MIT 9301), this protein is Phospho-N-acetylmuramoyl-pentapeptide-transferase.